The chain runs to 1458 residues: MLELKTNVIQDPELKDSLDLQENDRVEIIGDAVHYIVNDHLNRVFNYTVDQQKIHAALITTFASGKKAIVVILDDIGYVYYVGDNNNDSYIINVPFSTESAWSSPSGLYLQRHRSSDENLNTDLPHIFCLNDPLDELTLIKFDGKKILSLFDSIVYVVGEIVVTHNKKEKKLSFWRSRFIDPESDQSIKSSRNRRRESSFSREKNPDLTRSDSIHYTANTRLSEKFEEQGLAYSTIFSHIESFPITGSTSFDSILGNGVLVITTLVKELEKGYMMLFRLVRDRSPYFLDSLQLHAINLSAIKSKHLQKIVVLSSKGKVSLESPMSPSLPIEGTFRSFRVHGATLYLEDTDGVQRYISLDNRASNSLVKWCLSVIRYVLPLREYEIFYTGHLYALFAFKLSHDEAFISSILACFTFFSRDKVHVEPIEDCNEAYSLSSKFHFKKEILIASQLSSHLDYSTFKNYLMPLAITLHFISEELRLDSVVKPRKDQLVALLLQITTWLKWPRYCEYYNFDIAETFLSIPLSIQVDVEEPVGPTSILQWIIECLRSQSTVPFYGLESYGLPHSCSTMFPQTLSLMQLLDCLLNPNMTLQNLVEEMVRLGISRKRCERYPFGILCIIFTVLEIAAEEYSPNWESEELRLVNRLDVDSFLHPKTPKWVFNKQDQEVKEIKALTSTVTDSTLVDTQSFHPYKVVTDMIFREDRRLAEVNKLLNYSSQITIMTEHFDVDLSSVPMQQKVAQCICVRTLSVPIGAGMLTYGSKNPLPTEKVTPRLFNFTLHLHPGTLIIQPNKEFVTQELTEWPEFNVGVALGLSISKFSKEINTSWIMFNRPETLTAYHAGFLFGLGLNGHLKALATWHSFIYLTSKHDTTSIGLLLGLASSYLGSMDAKVTKLLSVHISALLPVGSNELNISPLTQTAGILGIGLLFHDSCHRRMSEVTMEEILASNESELKNEGYKLAAGFSLGLINLGRGSNLPGMSDLKLVSRLQVGISSQATFQSLEAGSPGAIMALTMIYMKTNDLEVAKKIDIPKSRYLLDFYRPDLILLRVAGKNLIMWDEVKADYEWVKYQIPDIMLSQFDLQEKKVLSSDDLLLYNVLAGICFSLGLRFAGTGNPKAKEILINFLDSFIRLCHLPAKTHDERVTAVTVIRCTQIVALSSSCVMAGYCDLDVLRRLRVLHGRMEPVNYGAQMATHMALGILSLGGGRYSLSRSNLAIAALLISFYPQFPRTTQDNRAHLQAARNLWALAVEERCIIPRNQDTKQPCIVPLNVVQKSGAVQKLEAPILLPPYDSISSVSTLGDKYWNLKIDLDNNSDYRELLRESQTLTLMPYDRTSSKEEPLNLFPKLKDTSSPLWNLVKTSRLFQSSNSPLNVASLQESNNKTSLGVKLLLSMDFDNLTRDRLLSLQILLQFFESCWTGVLLNKFHSRQYLFLSRDLVEDLSLRVWEYVYSHNHNEESV.

A disordered region spans residues 186–210; the sequence is QSIKSSRNRRRESSFSREKNPDLTR. The span at 196–210 shows a compositional bias: basic and acidic residues; the sequence is RESSFSREKNPDLTR. 4 PC repeats span residues 873–895, 959–982, 1006–1024, and 1099–1124; these read GLLL…KLLS, AAGF…SDLK, GAIM…LEVA, and GICF…INFL.

This sequence belongs to the APC1 family. The APC/C is composed of at least 13 subunits: apc1, apc2, nuc2, apc4, apc5, cut9, apc8, apc10, apc11, hcn1, apc13, apc14 and apc15.

In terms of biological role, component of the anaphase-promoting complex/cyclosome (APC/C), a cell cycle-regulated E3 ubiquitin-protein ligase complex that controls progression through mitosis and the G1 phase of the cell cycle. The APC/C is thought to confer substrate specificity and, in the presence of ubiquitin-conjugating E2 enzymes, it catalyzes the formation of protein-ubiquitin conjugates that are subsequently degraded by the 26S proteasome. Mutations to this protein prevent the exit from mitosis. The polypeptide is Anaphase-promoting complex subunit 1 (cut4) (Schizosaccharomyces pombe (strain 972 / ATCC 24843) (Fission yeast)).